A 190-amino-acid chain; its full sequence is Ion-translocating oxidoreductase complex subunit B (190 aa).

The segment at 1–26 is hydrophobic; it reads MLTFWLAVATLSALALVAGAVLGFAA. The 4Fe-4S domain occupies 32–90; that stretch reads KTDPVAERIDALLPQSQCAQCGYPGCRPYAEAVAGGAPINKCVPGGEAVMLKIAAQLSV. [4Fe-4S] cluster is bound by residues cysteine 49, cysteine 52, cysteine 57, cysteine 73, cysteine 115, cysteine 118, cysteine 121, cysteine 125, cysteine 145, cysteine 148, cysteine 151, and cysteine 155. 2 consecutive 4Fe-4S ferredoxin-type domains span residues 106 to 135 and 136 to 165; these read RVAW…GATR and AVHT…MRPL.

It belongs to the 4Fe4S bacterial-type ferredoxin family. RnfB subfamily. In terms of assembly, the complex is composed of six subunits: RnfA, RnfB, RnfC, RnfD, RnfE and RnfG. The cofactor is [4Fe-4S] cluster.

It is found in the cell inner membrane. Part of a membrane-bound complex that couples electron transfer with translocation of ions across the membrane. The sequence is that of Ion-translocating oxidoreductase complex subunit B from Sodalis glossinidius (strain morsitans).